The chain runs to 79 residues: UPF0181 protein PC1_1931 (79 aa).

Residues 54–79 (FDEDDDTVNDSDEEHYFDDGEEEDEQ) form a disordered region.

It belongs to the UPF0181 family.

The protein is UPF0181 protein PC1_1931 of Pectobacterium carotovorum subsp. carotovorum (strain PC1).